The primary structure comprises 117 residues: MLMLSTMTLIIFIITIVVMMLATLLSKKTLLDREKCSPFECGFDPMNSSRLPFSLRFFLIAIIFLIFDVEIALLLPMIMIIKTSNLMNWTITSLFFIFILLIGLYHEWNQGALEWNE.

3 helical membrane-spanning segments follow: residues 1 to 21 (MLMLSTMTLIIFIITIVVMML), 58 to 78 (FLIAIIFLIFDVEIALLLPMI), and 86 to 106 (LMNWTITSLFFIFILLIGLYH).

Belongs to the complex I subunit 3 family.

The protein resides in the mitochondrion membrane. The catalysed reaction is a ubiquinone + NADH + 5 H(+)(in) = a ubiquinol + NAD(+) + 4 H(+)(out). Its function is as follows. Core subunit of the mitochondrial membrane respiratory chain NADH dehydrogenase (Complex I) that is believed to belong to the minimal assembly required for catalysis. Complex I functions in the transfer of electrons from NADH to the respiratory chain. The immediate electron acceptor for the enzyme is believed to be ubiquinone. The sequence is that of NADH-ubiquinone oxidoreductase chain 3 (mt:ND3) from Anopheles gambiae (African malaria mosquito).